Here is a 395-residue protein sequence, read N- to C-terminus: Elongation factor Tu (395 aa).

A tr-type G domain is found at 10–205; it reads KPHVNVGTIG…VDNDIPIPPR (196 aa). A G1 region spans residues 19–26; it reads GHVDHGKT. 19–26 lines the GTP pocket; sequence GHVDHGKT. Residue Thr-26 coordinates Mg(2+). Residues 60 to 64 are G2; that stretch reads GITIN. The segment at 81 to 84 is G3; that stretch reads DCPG. Residues 81–85 and 136–139 each bind GTP; these read DCPGH and NKVD. The G4 stretch occupies residues 136 to 139; that stretch reads NKVD. The G5 stretch occupies residues 174–176; sequence SAL.

This sequence belongs to the TRAFAC class translation factor GTPase superfamily. Classic translation factor GTPase family. EF-Tu/EF-1A subfamily. Monomer.

Its subcellular location is the cytoplasm. It carries out the reaction GTP + H2O = GDP + phosphate + H(+). Its function is as follows. GTP hydrolase that promotes the GTP-dependent binding of aminoacyl-tRNA to the A-site of ribosomes during protein biosynthesis. In Cytophaga hutchinsonii (strain ATCC 33406 / DSM 1761 / CIP 103989 / NBRC 15051 / NCIMB 9469 / D465), this protein is Elongation factor Tu.